Reading from the N-terminus, the 406-residue chain is Protein ALP1-like (406 aa).

A Nuclear localization signal motif is present at residues 8–15; that stretch reads KKKKRAEK. Residues 187–353 form the DDE Tnp4 domain; sequence IDITHIVMNL…IIFVCCLLHN (167 aa). Residues D188, D240, and D279 each contribute to the a divalent metal cation site.

Belongs to the HARBI1 family. Requires a divalent metal cation as cofactor.

Its subcellular location is the nucleus. In terms of biological role, transposase-derived protein that may have nuclease activity. This is Protein ALP1-like from Arabidopsis thaliana (Mouse-ear cress).